Consider the following 444-residue polypeptide: Phosphoglucosamine mutase (444 aa).

S100 acts as the Phosphoserine intermediate in catalysis. Mg(2+) is bound by residues S100, D240, D242, and D244. S100 carries the phosphoserine modification.

The protein belongs to the phosphohexose mutase family. It depends on Mg(2+) as a cofactor. In terms of processing, activated by phosphorylation.

The catalysed reaction is alpha-D-glucosamine 1-phosphate = D-glucosamine 6-phosphate. Its function is as follows. Catalyzes the conversion of glucosamine-6-phosphate to glucosamine-1-phosphate. This Desulforamulus reducens (strain ATCC BAA-1160 / DSM 100696 / MI-1) (Desulfotomaculum reducens) protein is Phosphoglucosamine mutase.